Here is a 162-residue protein sequence, read N- to C-terminus: Large ribosomal subunit protein uL10 (162 aa).

Belongs to the universal ribosomal protein uL10 family. Part of the ribosomal stalk of the 50S ribosomal subunit. The N-terminus interacts with L11 and the large rRNA to form the base of the stalk. The C-terminus forms an elongated spine to which L12 dimers bind in a sequential fashion forming a multimeric L10(L12)X complex.

Its function is as follows. Forms part of the ribosomal stalk, playing a central role in the interaction of the ribosome with GTP-bound translation factors. This is Large ribosomal subunit protein uL10 from Borrelia duttonii (strain Ly).